Reading from the N-terminus, the 144-residue chain is Large ribosomal subunit protein uL15 (144 aa).

Residues 1–18 (MRLNDLHPAEGSRPEGKR) show a composition bias toward basic and acidic residues. The segment at 1-58 (MRLNDLHPAEGSRPEGKRVGRGIGSGLGKTGGRGHKGQKSRSGGSVKPGFEGGQMPLQ) is disordered. Residues 21–31 (RGIGSGLGKTG) are compositionally biased toward gly residues.

It belongs to the universal ribosomal protein uL15 family. Part of the 50S ribosomal subunit.

Its function is as follows. Binds to the 23S rRNA. The protein is Large ribosomal subunit protein uL15 of Alcanivorax borkumensis (strain ATCC 700651 / DSM 11573 / NCIMB 13689 / SK2).